The following is a 142-amino-acid chain: Small ribosomal subunit protein uS12 (142 aa).

The interval 1 to 30 (MGKTHGMGAARKLKSHRRTQRWADKSYKKS) is disordered. A compositionally biased stretch (basic residues) spans 11–20 (RKLKSHRRTQ). Basic and acidic residues predominate over residues 21 to 30 (RWADKSYKKS). Residue Pro-61 is modified to Hydroxyproline.

This sequence belongs to the universal ribosomal protein uS12 family.

This Euphorbia esula (Leafy spurge) protein is Small ribosomal subunit protein uS12 (RPS23).